The chain runs to 141 residues: Translation initiation factor 2 subunit beta (141 aa).

Belongs to the eIF-2-beta/eIF-5 family. Heterotrimer composed of an alpha, a beta and a gamma chain.

Functionally, eIF-2 functions in the early steps of protein synthesis by forming a ternary complex with GTP and initiator tRNA. The protein is Translation initiation factor 2 subunit beta of Thermofilum pendens (strain DSM 2475 / Hrk 5).